Consider the following 37-residue polypeptide: ACVPVYKECWYPQKPCCEDRVCQCSFGMTNCKCKARL.

4 disulfide bridges follow: cysteine 2–cysteine 17, cysteine 9–cysteine 22, cysteine 16–cysteine 33, and cysteine 24–cysteine 31.

In terms of tissue distribution, expressed by the venom gland.

Its subcellular location is the secreted. Functionally, antagonist of L-type calcium channels (Cav1/CACNA1). This Ctenus ornatus (Brazilian spider) protein is U10-ctenitoxin-Co1a.